The following is a 190-amino-acid chain: Probable nicotinate-nucleotide adenylyltransferase (190 aa).

The protein belongs to the NadD family.

The enzyme catalyses nicotinate beta-D-ribonucleotide + ATP + H(+) = deamido-NAD(+) + diphosphate. It participates in cofactor biosynthesis; NAD(+) biosynthesis; deamido-NAD(+) from nicotinate D-ribonucleotide: step 1/1. In terms of biological role, catalyzes the reversible adenylation of nicotinate mononucleotide (NaMN) to nicotinic acid adenine dinucleotide (NaAD). The polypeptide is Probable nicotinate-nucleotide adenylyltransferase (Frankia casuarinae (strain DSM 45818 / CECT 9043 / HFP020203 / CcI3)).